Reading from the N-terminus, the 104-residue chain is Large ribosomal subunit protein uL24 (104 aa).

Belongs to the universal ribosomal protein uL24 family. As to quaternary structure, part of the 50S ribosomal subunit.

Its function is as follows. One of two assembly initiator proteins, it binds directly to the 5'-end of the 23S rRNA, where it nucleates assembly of the 50S subunit. One of the proteins that surrounds the polypeptide exit tunnel on the outside of the subunit. The chain is Large ribosomal subunit protein uL24 from Herminiimonas arsenicoxydans.